The following is a 616-amino-acid chain: D-glutamate cyclase, mitochondrial (616 aa).

A mitochondrion-targeting transit peptide spans 1–28 (MPFTLHLRSRLPSAIRSLILQKKPNIRN).

This sequence belongs to the D-glutamate cyclase family.

Its subcellular location is the mitochondrion matrix. It carries out the reaction D-glutamate = 5-oxo-D-proline + H2O. In terms of biological role, D-glutamate cyclase that converts D-glutamate to 5-oxo-D-proline. This Homo sapiens (Human) protein is D-glutamate cyclase, mitochondrial.